The chain runs to 292 residues: MAKTDKVKIFFQHVMPKHLISRLIGKFAAARAGWFTQLFIRWFIRQYKIDMSEAIEESPKAYKTFNAFFTRHLKPELRPLEASESELAHPVDGAVSQLGDIENGRIFQAKGHDYSLQELLGGNEEDAKPFVDGKFATIYLAPKDYHRIHMPCDGVLKKMIYVPGDLYSVNPLTAANVPNLFARNERVVAIFDTEVGPMSLVLVGATIVASIGTVWSGTITPPTGGRIQSWSYPTSGHSAIHLKKGEEMGHFKLGSTVVLTFAKDAIEFNDELKPLSVTRMGEVMAEIKESDD.

Active-site charge relay system; for autoendoproteolytic cleavage activity residues include Asp-92, His-149, and Ser-255. Ser-255 (schiff-base intermediate with substrate; via pyruvic acid; for decarboxylase activity) is an active-site residue. Ser-255 bears the Pyruvic acid (Ser); by autocatalysis mark.

The protein belongs to the phosphatidylserine decarboxylase family. PSD-B subfamily. Prokaryotic type I sub-subfamily. In terms of assembly, heterodimer of a large membrane-associated beta subunit and a small pyruvoyl-containing alpha subunit. Pyruvate is required as a cofactor. Is synthesized initially as an inactive proenzyme. Formation of the active enzyme involves a self-maturation process in which the active site pyruvoyl group is generated from an internal serine residue via an autocatalytic post-translational modification. Two non-identical subunits are generated from the proenzyme in this reaction, and the pyruvate is formed at the N-terminus of the alpha chain, which is derived from the carboxyl end of the proenzyme. The autoendoproteolytic cleavage occurs by a canonical serine protease mechanism, in which the side chain hydroxyl group of the serine supplies its oxygen atom to form the C-terminus of the beta chain, while the remainder of the serine residue undergoes an oxidative deamination to produce ammonia and the pyruvoyl prosthetic group on the alpha chain. During this reaction, the Ser that is part of the protease active site of the proenzyme becomes the pyruvoyl prosthetic group, which constitutes an essential element of the active site of the mature decarboxylase.

It is found in the cell membrane. It carries out the reaction a 1,2-diacyl-sn-glycero-3-phospho-L-serine + H(+) = a 1,2-diacyl-sn-glycero-3-phosphoethanolamine + CO2. It participates in phospholipid metabolism; phosphatidylethanolamine biosynthesis; phosphatidylethanolamine from CDP-diacylglycerol: step 2/2. Its function is as follows. Catalyzes the formation of phosphatidylethanolamine (PtdEtn) from phosphatidylserine (PtdSer). In Idiomarina loihiensis (strain ATCC BAA-735 / DSM 15497 / L2-TR), this protein is Phosphatidylserine decarboxylase proenzyme.